The sequence spans 540 residues: Chaperonin GroEL (540 aa).

Residues 29–32 (TLGP), 86–90 (DGTTT), glycine 413, 477–479 (DAL), and aspartate 493 each bind ATP.

The protein belongs to the chaperonin (HSP60) family. Forms a cylinder of 14 subunits composed of two heptameric rings stacked back-to-back. Interacts with the co-chaperonin GroES.

Its subcellular location is the cytoplasm. The catalysed reaction is ATP + H2O + a folded polypeptide = ADP + phosphate + an unfolded polypeptide.. Together with its co-chaperonin GroES, plays an essential role in assisting protein folding. The GroEL-GroES system forms a nano-cage that allows encapsulation of the non-native substrate proteins and provides a physical environment optimized to promote and accelerate protein folding. The chain is Chaperonin GroEL from Clostridium botulinum (strain Eklund 17B / Type B).